The primary structure comprises 551 residues: Podocalyxin (551 aa).

Residues 1 to 21 (MRSALALAALLLLLLSPPSLS) form the signal peptide. The segment at 18 to 324 (PSLSQEKSPQ…QRVSCGPPER (307 aa)) is disordered. Over 22 to 452 (QEKSPQPGPT…PPEETEDRFS (431 aa)) the chain is Extracellular. Residues 32–59 (PMATSTSTRPAPASAPAPKSSVAASVPA) show a composition bias toward low complexity. The segment covering 60 to 90 (EQNTTPMTTKAPATQSPSASPGSSVENSAPA) has biased composition (polar residues). Low complexity predominate over residues 91–104 (QGSTTTQQSLSVTT). Residues 142–164 (APSNHSITTKPLATEATSQAPRQ) are compositionally biased toward polar residues. N-linked (GlcNAc...) asparagine glycans are attached at residues Asn-145 and Asn-180. Polar residues predominate over residues 234–244 (PVASSAETQGM). Positions 289–300 (TSSSTELASTAL) are enriched in low complexity. A glycan (N-linked (GlcNAc...) asparagine) is linked at Asn-333. The chain crosses the membrane as a helical span at residues 453–473 (LPLIITIVCMASFLLLVAALY). Residues 474–551 (GCCHQRLSHR…DLDEEEDTHL (78 aa)) lie on the Cytoplasmic side of the membrane. Thr-511 is subject to Phosphothreonine. Ser-530 is modified (phosphoserine). Thr-549 is subject to Phosphothreonine.

Belongs to the podocalyxin family. As to quaternary structure, monomer; when associated with the membrane raft. Oligomer; when integrated in the apical membrane. Found in a complex with EZR, PODXL and NHERF2. Associates with the actin cytoskeleton through complex formation with EZR and NHERF2. Interacts (via the C-terminal PDZ-binding motif DTHL) with NHERF1 (via the PDZ domains); interaction is not detected in glomerular epithelium cells, take place early in the secretory pathway and is necessary for its apical membrane sorting. Interacts (via the C-terminal PDZ-binding motif DTHL) with NHERF2 (via the PDZ 1 domain); interaction is detected in glomerular epithelium cells. Interacts with EZR. Post-translationally, N- and O-linked glycosylated. Sialoglycoprotein. In terms of tissue distribution, glomerular epithelium cell (podocyte) and endothelial cells.

The protein localises to the apical cell membrane. The protein resides in the cell projection. Its subcellular location is the microvillus. It is found in the membrane raft. It localises to the lamellipodium. The protein localises to the filopodium. The protein resides in the ruffle. Its subcellular location is the membrane. Involved in the regulation of both adhesion and cell morphology and cancer progression. Functions as an anti-adhesive molecule that maintains an open filtration pathway between neighboring foot processes in the podocyte by charge repulsion. Acts as a pro-adhesive molecule, enhancing the adherence of cells to immobilized ligands, increasing the rate of migration and cell-cell contacts in an integrin-dependent manner. Induces the formation of apical actin-dependent microvilli. Involved in the formation of a preapical plasma membrane subdomain to set up initial epithelial polarization and the apical lumen formation during renal tubulogenesis. Plays a role in cancer development and aggressiveness by inducing cell migration and invasion through its interaction with the actin-binding protein EZR. Affects EZR-dependent signaling events, leading to increased activities of the MAPK and PI3K pathways in cancer cells. In Oryctolagus cuniculus (Rabbit), this protein is Podocalyxin (PODXL).